A 464-amino-acid chain; its full sequence is Secretion-regulating guanine nucleotide exchange factor (464 aa).

7 RCC1 repeats span residues 15–67, 68–119, 120–171, 172–230, 231–283, 284–351, and 352–402; these read AVLF…VTDG, GDLF…LTEK, GQVL…TTAT, GSVF…LTDT, GELY…KTET, GKVF…VIRD, and KCCS…LAVC. The interval 422-464 is disordered; sequence DDTENTESQGAVDRDRLEGETISDLNPDRTRNGGGGCESETVQ. At Ser-429 the chain carries Phosphoserine.

As to quaternary structure, interacts with SEC5. The interaction occurs only in the presence of magnesium or manganese and is stimulated by dCTP or GTP.

It localises to the cytoplasm. The protein localises to the nucleus. Functionally, probable guanine nucleotide exchange factor (GEF), which may be involved in the secretion process. The protein is Secretion-regulating guanine nucleotide exchange factor (Sergef) of Mus musculus (Mouse).